A 92-amino-acid chain; its full sequence is Movement protein (92 aa).

Residues 38 to 58 (VIALVVILVSVGVFYLAYTLF) form a helical membrane-spanning segment.

The protein belongs to the mastrevirus movement protein family. Interacts with the capsid protein (CP). Part of a MP-CP-viral DNA complex.

It is found in the host membrane. Involved in the viral transport within, and between cells. This Phaseolus vulgaris (Kidney bean) protein is Movement protein.